We begin with the raw amino-acid sequence, 589 residues long: Putative phospholipase B-like 2 (589 aa).

The signal sequence occupies residues 1–41 (MVGQMYCYPGSHLARALTRALALALVLALLVGPFLSGLAGA). N-linked (GlcNAc...) asparagine glycans are attached at residues Asn88 and Asn110. An intrachain disulfide couples Cys142 to Cys152. Residues Asn231, Asn436, and Asn465 are each glycosylated (N-linked (GlcNAc...) asparagine). Residues Cys492 and Cys495 are joined by a disulfide bond. Residue Asn515 is glycosylated (N-linked (GlcNAc...) asparagine).

Belongs to the phospholipase B-like family. Interacts with IGF2R. In terms of processing, the p76 protein is synthesized as a 80 kDa precursor which is then processed into a N-terminal 32 kDa form and a C-terminal 45 kDa form. Post-translationally, glycosylated; contains mannose 6-phosphate sugars. As to expression, ubiquitously expressed, with highest levels in heart, brain and liver.

Its subcellular location is the lysosome lumen. Functionally, putative phospholipase. This Homo sapiens (Human) protein is Putative phospholipase B-like 2 (PLBD2).